Consider the following 363-residue polypeptide: Tetraacyldisaccharide 4'-kinase (363 aa).

78–85 (TVGGNGKT) contacts ATP.

Belongs to the LpxK family.

The catalysed reaction is a lipid A disaccharide + ATP = a lipid IVA + ADP + H(+). It functions in the pathway glycolipid biosynthesis; lipid IV(A) biosynthesis; lipid IV(A) from (3R)-3-hydroxytetradecanoyl-[acyl-carrier-protein] and UDP-N-acetyl-alpha-D-glucosamine: step 6/6. In terms of biological role, transfers the gamma-phosphate of ATP to the 4'-position of a tetraacyldisaccharide 1-phosphate intermediate (termed DS-1-P) to form tetraacyldisaccharide 1,4'-bis-phosphate (lipid IVA). In Wigglesworthia glossinidia brevipalpis, this protein is Tetraacyldisaccharide 4'-kinase.